The sequence spans 65 residues: Large ribosomal subunit protein bL35 (65 aa).

Belongs to the bacterial ribosomal protein bL35 family.

The protein is Large ribosomal subunit protein bL35 of Paraburkholderia xenovorans (strain LB400).